The following is a 200-amino-acid chain: UPF0301 protein BOV_0485 (200 aa).

It belongs to the UPF0301 (AlgH) family.

The protein is UPF0301 protein BOV_0485 of Brucella ovis (strain ATCC 25840 / 63/290 / NCTC 10512).